A 321-amino-acid polypeptide reads, in one-letter code: Mitochondrial coenzyme A transporter SLC25A42 (321 aa).

Solcar repeat units lie at residues 33-119 (RSVL…YKGI), 131-216 (LPPV…LKKT), and 226-314 (PFPY…TQIL). Transmembrane regions (helical) follow at residues 35–55 (VLNSLVSGAFAGAVAKTAVAP), 91–111 (LWRGNSATMVRVIPYAAIQFC), 137–154 (LLAGSLAGTTAAIITYPL), 191–208 (GFTPTILGVVPYAGLSFF), 232–252 (LVFGACAGLIGQSASYPLDVV), and 295–315 (VKGPIAVGISFMTFDLTQILL).

It belongs to the mitochondrial carrier (TC 2.A.29) family.

The protein localises to the mitochondrion inner membrane. It catalyses the reaction ADP(out) + CoA(in) = ADP(in) + CoA(out). The catalysed reaction is 3'-dephospho-CoA(in) + ADP(out) = 3'-dephospho-CoA(out) + ADP(in). It carries out the reaction adenosine 3',5'-bisphosphate(in) + ADP(out) = adenosine 3',5'-bisphosphate(out) + ADP(in). The enzyme catalyses AMP(in) + ADP(out) = AMP(out) + ADP(in). It catalyses the reaction dADP(in) + ADP(out) = dADP(out) + ADP(in). The catalysed reaction is ADP(in) + ATP(out) = ADP(out) + ATP(in). Its function is as follows. Mitochondrial carrier mediating the transport of coenzyme A (CoA) in mitochondria in exchange for intramitochondrial (deoxy)adenine nucleotides and adenosine 3',5'-diphosphate. This chain is Mitochondrial coenzyme A transporter SLC25A42 (slc25a42), found in Danio rerio (Zebrafish).